Reading from the N-terminus, the 262-residue chain is 5'-nucleotidase SurE (262 aa).

A divalent metal cation contacts are provided by aspartate 8, aspartate 9, serine 40, and asparagine 92.

The protein belongs to the SurE nucleotidase family. Requires a divalent metal cation as cofactor.

It localises to the cytoplasm. The catalysed reaction is a ribonucleoside 5'-phosphate + H2O = a ribonucleoside + phosphate. Nucleotidase that shows phosphatase activity on nucleoside 5'-monophosphates. In Xylella fastidiosa (strain 9a5c), this protein is 5'-nucleotidase SurE.